The chain runs to 340 residues: Organic solute transporter subunit alpha (340 aa).

Over 1–48 the chain is Extracellular; it reads MEPGRTHIKLDPRYTAELLELLETNYSISPACFSHPPTAAQLLRALGP. N-linked (GlcNAc...) asparagine glycosylation occurs at N25. Residues 49 to 69 form a helical membrane-spanning segment; that stretch reads VDIALTIILTFLTTGSVAIFL. At 70–87 the chain is on the cytoplasmic side; that stretch reads EDAVYLYKNTLCPIKKRT. A helical transmembrane segment spans residues 88 to 108; it reads LIWSSSAPTVVSVFCCFGLWI. At 109–114 the chain is on the extracellular side; it reads PRALTL. The helical transmembrane segment at 115 to 135 threads the bilayer; the sequence is VEMAITSFYAVCFYLLMMVMV. Residues 136–181 lie on the Cytoplasmic side of the membrane; the sequence is EGFGGKKAVLRTLKDTPMRVHTGPCCCCCPCCPPLILTRKKLQLLL. A helical membrane pass occupies residues 182–202; that stretch reads LGPFQYAFFKITLSIVGLFLI. Topologically, residues 203-219 are extracellular; it reads PDGIYDPGEISEKSAAL. The helical transmembrane segment at 220–240 threads the bilayer; the sequence is WINNLLAVSTLLALWSLAILF. The Cytoplasmic portion of the chain corresponds to 241–255; sequence RQAKMHLGEQNMGSK. A helical membrane pass occupies residues 256-276; the sequence is FALFQVLVILTALQPAIFSIL. The Extracellular segment spans residues 277-297; it reads ANSGQIACSPPYSSKIRSQVM. A helical transmembrane segment spans residues 298–317; sequence NCHMLILETFLMTVLTRMYY. Topologically, residues 318 to 340 are cytoplasmic; sequence RRKDDKVGYEACSLPDLDSALKA. A Phosphoserine modification is found at S330.

Belongs to the OST-alpha family. Interacts with SLC51B. The Ost-alpha/Ost-beta complex is a heterodimer composed of alpha (SLC51A) and beta (SLC51B) subunit. N-glycosylated. As to expression, present at high levels in ileum. In ileum, it is restricted to the apical domain on the mature villus enterocytes with little detectable expression in the goblet cells or crypt enterocytes (at protein level). Expressed in kidney but not in heart, brain, liver, spleen, embryo, lung, thymus, ovary nor testis.

It is found in the cell membrane. Its subcellular location is the endoplasmic reticulum membrane. The catalysed reaction is taurocholate(out) = taurocholate(in). It catalyses the reaction tauroursodeoxycholate(out) = tauroursodeoxycholate(in). The enzyme catalyses glycoursodeoxycholate(out) = glycoursodeoxycholate(in). It carries out the reaction glycocholate(out) = glycocholate(in). The catalysed reaction is taurochenodeoxycholate(out) = taurochenodeoxycholate(in). It catalyses the reaction glycochenodeoxycholate(out) = glycochenodeoxycholate(in). The enzyme catalyses taurodeoxycholate(out) = taurodeoxycholate(in). It carries out the reaction glycodeoxycholate(out) = glycodeoxycholate(in). The catalysed reaction is prostaglandin E2(out) = prostaglandin E2(in). It catalyses the reaction estrone 3-sulfate(out) = estrone 3-sulfate(in). The enzyme catalyses dehydroepiandrosterone 3-sulfate(out) = dehydroepiandrosterone 3-sulfate(in). Essential component of the Ost-alpha/Ost-beta complex, a heterodimer that acts as the intestinal basolateral transporter responsible for bile acid export from enterocytes into portal blood. Efficiently transports the major species of bile acids (taurocholate). Taurine conjugates are transported more efficiently across the basolateral membrane than glycine-conjugated bile acids. Can also transport steroids such as estrone 3-sulfate and dehydroepiandrosterone 3-sulfate, therefore playing a role in the enterohepatic circulation of sterols. Able to transport eicosanoids such as prostaglandin E2. The sequence is that of Organic solute transporter subunit alpha (Slc51a) from Mus musculus (Mouse).